The following is a 361-amino-acid chain: Ribosomal RNA large subunit methyltransferase M (361 aa).

S-adenosyl-L-methionine contacts are provided by residues Ser-187, 220 to 223, Asp-239, Asp-259, and Asp-276; that span reads CPGG. The Proton acceptor role is filled by Lys-305.

It belongs to the class I-like SAM-binding methyltransferase superfamily. RNA methyltransferase RlmE family. RlmM subfamily. As to quaternary structure, monomer.

The protein resides in the cytoplasm. The catalysed reaction is cytidine(2498) in 23S rRNA + S-adenosyl-L-methionine = 2'-O-methylcytidine(2498) in 23S rRNA + S-adenosyl-L-homocysteine + H(+). Catalyzes the 2'-O-methylation at nucleotide C2498 in 23S rRNA. The chain is Ribosomal RNA large subunit methyltransferase M from Shewanella amazonensis (strain ATCC BAA-1098 / SB2B).